Reading from the N-terminus, the 1058-residue chain is Bromodomain-containing protein 1 (1058 aa).

The span at 1–12 (MRRKGRCHRGSA) shows a compositional bias: basic residues. A disordered region spans residues 1 to 25 (MRRKGRCHRGSAARHPSSPCSIKHS). The interaction with KAT7/HBO1 and histones stretch occupies residues 31 to 80 (LTYAQAQRMVEIEIEGRLHRISIFDPLEIILEDDLTAQEMSECNSNKENS). Ser128 is subject to Phosphoserine. Residues 214-264 (DAVCCICMDGECQNSNVILFCDMCNLAVHQECYGVPYIPEGQWLCRHCLQS) form a PHD-type 1 zinc finger. Residues 268 to 301 (PADCVLCPNKGGAFKKTDDDRWGHVVCALWIPEV) form a C2HC pre-PHD-type zinc finger. The PHD-type 2 zinc-finger motif lies at 325-389 (LTCYLCKQKG…RKTAYCDVHT (65 aa)). N6-acetyllysine occurs at positions 368, 516, and 519. Glycyl lysine isopeptide (Lys-Gly) (interchain with G-Cter in SUMO2) cross-links involve residues Lys554 and Lys594. The Bromo domain occupies 562 to 666 (LRLTPLTVLL…DQGGVVLRQA (105 aa)). Residues 754-763 (KLSQQHSQAP) are compositionally biased toward polar residues. Disordered regions lie at residues 754–776 (KLSQ…EDEA) and 791–847 (LETL…AAPR). Position 803 is a phosphoserine (Ser803). N6-acetyllysine is present on Lys903. In terms of domain architecture, PWWP spans 929–1012 (PLKVVWAKCS…KSKMVPLGVD (84 aa)). A phosphoserine mark is found at Ser1052 and Ser1055.

In terms of assembly, component of some HBO1 complexes composed of KAT7/HBO1, MEAF6, ING4 and BRD1/BRPF2. Component of the MOZ/MORF complex composed at least of ING5, KAT6A, KAT6B, MEAF6 and one of BRPF1, BRD1/BRPF2 and BRPF3. Interacts (via PHD-type zinc finger domain) with unmodified histone H3. Interacts (via PWWP domain) with dimethylated and trimethylated 'Lys-79' on histone H3.

It is found in the nucleus. The protein localises to the chromosome. Scaffold subunit of various histone acetyltransferase (HAT) complexes, such as the MOZ/MORF and HBO1 complexes, that acts as a regulator of hematopoiesis. Plays a key role in HBO1 complex by directing KAT7/HBO1 specificity towards histone H3 'Lys-14' acetylation (H3K14ac), thereby promoting erythroid differentiation. The polypeptide is Bromodomain-containing protein 1 (Mus musculus (Mouse)).